The primary structure comprises 529 residues: Zinc finger CCCH domain-containing protein 65 (529 aa).

The span at 1–10 (MADADARAPP) shows a compositional bias: basic and acidic residues. Disordered regions lie at residues 1–36 (MADA…EDEV) and 134–179 (PARK…GSYV). Over residues 14–31 (PGATPIGSISPSSAAPAA) the composition is skewed to low complexity. C3H1-type zinc fingers lie at residues 108–136 (RPGE…HPAR), 237–265 (GSSQ…HRDG), and 285–313 (RPGE…HPDP). Residues 313–347 (PSNVASKDPQLEHENGDAPQQDVQGSSSQPNASIW) are disordered. Positions 333 to 344 (QDVQGSSSQPNA) are enriched in polar residues. 2 consecutive C3H1-type zinc fingers follow at residues 433 to 461 (RPGQ…HPRS) and 477 to 505 (KPDQ…HPFN).

This chain is Zinc finger CCCH domain-containing protein 65, found in Oryza sativa subsp. japonica (Rice).